A 529-amino-acid chain; its full sequence is Cytochrome P450 monooxygenase 136 (529 aa).

A helical transmembrane segment spans residues serine 9–tyrosine 29. Residue cysteine 447 coordinates heme.

Belongs to the cytochrome P450 family. Requires heme as cofactor.

The protein localises to the membrane. Its pathway is secondary metabolite biosynthesis. Its function is as follows. Cytochrome P450 monooxygenase that is able to use delta(6)-protoilludene as a substrate to produce delta(6)-protoilludene-5-ol. The protein is Cytochrome P450 monooxygenase 136 of Postia placenta (strain ATCC 44394 / Madison 698-R) (Brown rot fungus).